We begin with the raw amino-acid sequence, 244 residues long: uncharacterized protein (244 aa).

The signal sequence occupies residues 1–18 (MQFSVLCKFLLLVTAVMA). Residues 19–223 (QTEYTPGFTT…TTIPSSAVHY (205 aa)) are Lumenal-facing. 2 stretches are compositionally biased toward low complexity: residues 55 to 65 (ETSTHSVTSTN) and 75 to 128 (TSHN…TTHV). Positions 55–128 (ETSTHSVTST…TTVVPPTTHV (74 aa)) are disordered. The helical transmembrane segment at 224–244 (ASPSGLLALVVMLISAFAFLA) threads the bilayer.

It is found in the endoplasmic reticulum membrane. This is an uncharacterized protein from Schizosaccharomyces pombe (strain 972 / ATCC 24843) (Fission yeast).